The chain runs to 64 residues: Epidermal growth factor (64 aa).

An N-terminal signal peptide occupies residues 1-21; that stretch reads MMRHLLLVGAAILIFVSDAQA. A Pyrrolidone carboxylic acid modification is found at Gln-22. The region spanning 25-61 is the EGF-like domain; sequence GEDPCQIVRCSYGANCIAYGDTAICECPFGYSGIRCQ. 3 disulfides stabilise this stretch: Cys-29/Cys-40, Cys-34/Cys-49, and Cys-51/Cys-60.

In terms of tissue distribution, albumen gland. Up-regulated in adult CNS after axotomy.

It is found in the secreted. Induces neurite outgrowth in specific adult neurons in vitro. This is Epidermal growth factor from Lymnaea stagnalis (Great pond snail).